Reading from the N-terminus, the 115-residue chain is Aspartate 1-decarboxylase (115 aa).

Ser25 functions as the Schiff-base intermediate with substrate; via pyruvic acid in the catalytic mechanism. Position 25 is a pyruvic acid (Ser) (Ser25). Substrate is bound at residue Thr57. Catalysis depends on Tyr58, which acts as the Proton donor. 71–73 (GAA) serves as a coordination point for substrate.

It belongs to the PanD family. As to quaternary structure, heterooctamer of four alpha and four beta subunits. Pyruvate is required as a cofactor. Post-translationally, is synthesized initially as an inactive proenzyme, which is activated by self-cleavage at a specific serine bond to produce a beta-subunit with a hydroxyl group at its C-terminus and an alpha-subunit with a pyruvoyl group at its N-terminus.

The protein resides in the cytoplasm. It catalyses the reaction L-aspartate + H(+) = beta-alanine + CO2. The protein operates within cofactor biosynthesis; (R)-pantothenate biosynthesis; beta-alanine from L-aspartate: step 1/1. Its function is as follows. Catalyzes the pyruvoyl-dependent decarboxylation of aspartate to produce beta-alanine. In Campylobacter concisus (strain 13826), this protein is Aspartate 1-decarboxylase.